A 1194-amino-acid chain; its full sequence is Pre-mRNA-processing ATP-dependent RNA helicase prp-5 (1194 aa).

Disordered stretches follow at residues 1–201 (MARL…KEAK), 224–248 (AVVG…ASPA), and 452–484 (ASGE…DDYG). Composition is skewed to basic and acidic residues over residues 21–37 (RKDD…GPVD) and 44–154 (SPID…RDQP). The segment covering 156 to 176 (PGNTTAKENEPAKSTPTQPQT) has biased composition (polar residues). Positions 177 to 186 (EAEKKAERLR) are enriched in basic and acidic residues. Residues 232 to 248 (SPAPASPAAAESPASPA) show a composition bias toward low complexity. Residues 455–469 (EESHSKADTLTEKKN) are compositionally biased toward basic and acidic residues. Residues 561-589 (QKWSQCGLTRPILDTIESLGFEKPTPIQM) carry the Q motif motif. The Helicase ATP-binding domain maps to 592–770 (LPVIMSGRDV…KKVLRDPVEI (179 aa)). 605–612 (AKTGSGKT) contacts ATP. A DEAD box motif is present at residues 718 to 721 (DEAD). In terms of domain architecture, Helicase C-terminal spans 797 to 945 (RLLELLGELY…PVPDRLNEMR (149 aa)). Disordered stretches follow at residues 952-1011 (VKAG…DKTK) and 1025-1056 (DASK…SGGA). 3 stretches are compositionally biased toward basic and acidic residues: residues 967-980 (GLEK…AARM), 997-1011 (EDAP…DKTK), and 1025-1036 (DASKAETEDKHA).

It belongs to the DEAD box helicase family. DDX46/PRP5 subfamily.

The protein resides in the nucleus. It carries out the reaction ATP + H2O = ADP + phosphate + H(+). ATP-dependent RNA helicase involved spliceosome assembly and in nuclear splicing. Catalyzes an ATP-dependent conformational change of U2 snRNP. Bridges U1 and U2 snRNPs and enables stable U2 snRNP association with intron RNA. The chain is Pre-mRNA-processing ATP-dependent RNA helicase prp-5 (prp-5) from Neurospora crassa (strain ATCC 24698 / 74-OR23-1A / CBS 708.71 / DSM 1257 / FGSC 987).